The primary structure comprises 472 residues: N-succinylglutamate 5-semialdehyde dehydrogenase 1 (472 aa).

NAD(+) is bound at residue 209–214; it reads GGVQAG. Active-site residues include Glu232 and Cys266.

The protein belongs to the aldehyde dehydrogenase family. AstD subfamily.

It carries out the reaction N-succinyl-L-glutamate 5-semialdehyde + NAD(+) + H2O = N-succinyl-L-glutamate + NADH + 2 H(+). The protein operates within amino-acid degradation; L-arginine degradation via AST pathway; L-glutamate and succinate from L-arginine: step 4/5. In terms of biological role, catalyzes the NAD-dependent reduction of succinylglutamate semialdehyde into succinylglutamate. The chain is N-succinylglutamate 5-semialdehyde dehydrogenase 1 from Caulobacter vibrioides (strain ATCC 19089 / CIP 103742 / CB 15) (Caulobacter crescentus).